The chain runs to 412 residues: DNA utilization protein HofQ (412 aa).

A signal peptide spans 1–18 (MKQWIAALLLMLIPGVQA).

This sequence belongs to the bacterial secretin family. PilQ subfamily.

It localises to the cell outer membrane. In terms of biological role, required for the use of extracellular DNA as a nutrient. Could be the porin responsible for transport of DNA across the outer membrane. In Escherichia coli (strain K12), this protein is DNA utilization protein HofQ (hofQ).